Here is a 222-residue protein sequence, read N- to C-terminus: MNSTPKAVVIFSGGQDSTTCLFQAIQEFGVENVEVVTFQYGQRHAIELEKAAWIAKDLGVKQTLIDTSVIKAITSNAMMEEREIKQEGNTPNTFVDGRNALFLLYTAIYAKGQGIRTIFTGVCETDFSGYPDCRDVFVKSMNVTLNLAMDYNFNIRTPLMYLTKKQTWALADKLGAFDYIRQHTHTCYLGVEGGCHTCPSCVLREKGLNEYLSEKTSGQKYV.

11–21 (FSGGQDSTTCL) contributes to the ATP binding site. Positions 187, 195, 198, and 201 each coordinate Zn(2+).

Belongs to the QueC family. Zn(2+) serves as cofactor.

It catalyses the reaction 7-carboxy-7-deazaguanine + NH4(+) + ATP = 7-cyano-7-deazaguanine + ADP + phosphate + H2O + H(+). Its pathway is purine metabolism; 7-cyano-7-deazaguanine biosynthesis. In terms of biological role, catalyzes the ATP-dependent conversion of 7-carboxy-7-deazaguanine (CDG) to 7-cyano-7-deazaguanine (preQ(0)). The polypeptide is 7-cyano-7-deazaguanine synthase (Actinobacillus pleuropneumoniae serotype 7 (strain AP76)).